A 307-amino-acid chain; its full sequence is UDP-3-O-acyl-N-acetylglucosamine deacetylase (307 aa).

Residues His78, His241, and Asp245 each coordinate Zn(2+). Catalysis depends on His268, which acts as the Proton donor.

The protein belongs to the LpxC family. Requires Zn(2+) as cofactor.

It catalyses the reaction a UDP-3-O-[(3R)-3-hydroxyacyl]-N-acetyl-alpha-D-glucosamine + H2O = a UDP-3-O-[(3R)-3-hydroxyacyl]-alpha-D-glucosamine + acetate. It functions in the pathway glycolipid biosynthesis; lipid IV(A) biosynthesis; lipid IV(A) from (3R)-3-hydroxytetradecanoyl-[acyl-carrier-protein] and UDP-N-acetyl-alpha-D-glucosamine: step 2/6. Functionally, catalyzes the hydrolysis of UDP-3-O-myristoyl-N-acetylglucosamine to form UDP-3-O-myristoylglucosamine and acetate, the committed step in lipid A biosynthesis. This Variovorax paradoxus (strain S110) protein is UDP-3-O-acyl-N-acetylglucosamine deacetylase.